We begin with the raw amino-acid sequence, 540 residues long: L-aspartate oxidase (540 aa).

FAD-binding positions include 16–19, Lys38, 45–52, 161–162, and Asp223; these read SGAA, STFYAQGG, and NA. Succinate is bound by residues His244 and 259–260; that span reads TE. Residue Arg290 is the Proton donor/acceptor of the active site. FAD is bound at residue Glu375. A succinate-binding site is contributed by Ser389. 391–392 is an FAD binding site; sequence SL.

It belongs to the FAD-dependent oxidoreductase 2 family. NadB subfamily. As to quaternary structure, monomer. Homodimer. Both the monomeric and dimeric forms of the enzyme are catalytically active. The cofactor is FAD.

Its subcellular location is the cytoplasm. The enzyme catalyses L-aspartate + O2 = iminosuccinate + H2O2. It catalyses the reaction fumarate + L-aspartate = iminosuccinate + succinate. Its pathway is cofactor biosynthesis; NAD(+) biosynthesis; iminoaspartate from L-aspartate (oxidase route): step 1/1. Inhibited by the product iminoaspartate. Competitively inhibited by mesotartrate. NAD acts as a competitive inhibitor to FAD. Inhibited by iodoacetic acid, diethylpyrocarbonate and tetranitromethane. Functionally, catalyzes the oxidation of L-aspartate to iminoaspartate, the first step in the de novo biosynthesis of NAD(+). Can use either oxygen or fumarate as electron acceptors, which allows the enzyme to be functional under aerobic and anaerobic conditions. In vivo, fumarate is used under anaerobic conditions, and oxygen is the predominant electron acceptor under aerobic conditions due to the lower fumarate levels. In vitro, fumarate is a more efficient electron acceptor and is kinetically superior to oxygen. The polypeptide is L-aspartate oxidase (Escherichia coli (strain K12)).